Reading from the N-terminus, the 122-residue chain is Phosphoribosyl-ATP pyrophosphatase (122 aa).

Belongs to the PRA-PH family.

It localises to the cytoplasm. The catalysed reaction is 1-(5-phospho-beta-D-ribosyl)-ATP + H2O = 1-(5-phospho-beta-D-ribosyl)-5'-AMP + diphosphate + H(+). The protein operates within amino-acid biosynthesis; L-histidine biosynthesis; L-histidine from 5-phospho-alpha-D-ribose 1-diphosphate: step 2/9. The chain is Phosphoribosyl-ATP pyrophosphatase from Burkholderia thailandensis (strain ATCC 700388 / DSM 13276 / CCUG 48851 / CIP 106301 / E264).